A 444-amino-acid polypeptide reads, in one-letter code: MFNNTIRKTHAIRTAAACVAFALMSAGAQAATDIPFWHSMEGELGKEVNSLADRFNKEHTDVKIVPVYKGNYEQNLAAGIAAYRAGNAPAILQVYEVGTATMMASKAIKPVYEVFKDAGINFDESVFVPTVSGYYTDAKSGHLLSQPFNSSTPVLYYNKDAFKKAGLDPEQPPKTWQQMADYTAKLRSAGMKCGYASGWQGWIQIENFSAWNGLPVATKNNGFDGTDTVLEFNKPTQVKHIQLLQDMNKKGDFTYFGRKDEPTEKFYNGECAMTTASSGSLANIREHAKFNYGVGMMPYDADAKGAPQNAIIGGASLWVMGGKDAATYKGVAEFMQFLAKPENAAEWHQKTGYLPITTAAYELTQKQGFYEKNPGADIATRQMLNKPPLPFTKGMRLGNMPQIRTVVDEELESVWTGKKTPQQALDSAVERGNALLRRFEQSTK.

A signal peptide spans 1-30 (MFNNTIRKTHAIRTAAACVAFALMSAGAQA). The sn-glycerol 3-phosphate site is built by Tyr72, Glu96, Ser151, Ser277, Gly314, Tyr353, and Arg404.

This sequence belongs to the bacterial solute-binding protein 1 family. The complex is composed of two ATP-binding proteins (UgpC), two transmembrane proteins (UgpA and UgpE) and a solute-binding protein (UgpB).

It is found in the periplasm. In terms of biological role, part of the ABC transporter complex UgpBAEC involved in sn-glycerol-3-phosphate (G3P) import. Binds G3P. The sequence is that of sn-glycerol-3-phosphate-binding periplasmic protein UgpB (ugpB) from Pectobacterium atrosepticum (strain SCRI 1043 / ATCC BAA-672) (Erwinia carotovora subsp. atroseptica).